The sequence spans 211 residues: Large ribosomal subunit protein uL4 (211 aa).

Polar residues predominate over residues 41-52 (QTNARQGTASTK). A disordered region spans residues 41–78 (QTNARQGTASTKTRAEVRGGGRKPWRQKGTGRARAGSI). Residues 60–71 (GGRKPWRQKGTG) show a composition bias toward basic residues.

It belongs to the universal ribosomal protein uL4 family. In terms of assembly, part of the 50S ribosomal subunit.

One of the primary rRNA binding proteins, this protein initially binds near the 5'-end of the 23S rRNA. It is important during the early stages of 50S assembly. It makes multiple contacts with different domains of the 23S rRNA in the assembled 50S subunit and ribosome. Its function is as follows. Forms part of the polypeptide exit tunnel. The sequence is that of Large ribosomal subunit protein uL4 from Rippkaea orientalis (strain PCC 8801 / RF-1) (Cyanothece sp. (strain PCC 8801)).